A 325-amino-acid chain; its full sequence is Bifunctional ligase/repressor BirA (325 aa).

Positions 23–42 form a DNA-binding region, H-T-H motif; the sequence is GQKISDALGCSRTAVWKHIE. The region spanning 74-262 is the BPL/LPL catalytic domain; it reads RFGLKTEVMG…CFEKRYRDYM (189 aa). Residues Gln118, 122–124, and Lys189 each bind biotin; that span reads RGR.

The protein belongs to the biotin--protein ligase family.

It carries out the reaction biotin + L-lysyl-[protein] + ATP = N(6)-biotinyl-L-lysyl-[protein] + AMP + diphosphate + H(+). Its function is as follows. Acts both as a biotin--[acetyl-CoA-carboxylase] ligase and a repressor. This chain is Bifunctional ligase/repressor BirA, found in Bacillus spizizenii (strain ATCC 23059 / NRRL B-14472 / W23) (Bacillus subtilis subsp. spizizenii).